The primary structure comprises 214 residues: A-type ATP synthase subunit D (214 aa).

The protein belongs to the V-ATPase D subunit family. As to quaternary structure, has multiple subunits with at least A(3), B(3), C, D, E, F, H, I and proteolipid K(x).

Its subcellular location is the cell membrane. Component of the A-type ATP synthase that produces ATP from ADP in the presence of a proton gradient across the membrane. This Thermococcus sibiricus (strain DSM 12597 / MM 739) protein is A-type ATP synthase subunit D.